The chain runs to 480 residues: MTLSFTARWRDELPATYTALLPTPLKNARLIWYNDKLAQQLAIPASLFDVTNGAGVWGGETLLPGMSPVAQVCSGHQFGVWAGQLGDGRGILLGEQLLADGSTLDWHLKGAGLTPYSRMGDGRAVLRSTIRESLASEAMHYLGIPTTRALSIVASDTPVQRETQETGAMLMRLAQSHMRFGHFEHFYYRREPEKVQQLADFAIRHYWPQWQDVPEKYVLWFEEVAARTGRLIAEWQTVGFSHGVMNTDNMSILGLTIDYGPFGFLDDYDPGFIGNHSDHQGRYRFDNQPSVALWNLQRLAQTLTPFIEIDALNRALDRYQDALLTHYGQRMRQKLGFFTEQKDDNVLLNELFSLMAREGSDYSRTFRMLSHTEQQSASSPLRDTFIDRAAFDAWFDRYRARLRTEAVDDALRQQQMQRVNPAVVLRNWLAQRAIDAAEQGDMAELHWLHEVLRQPFTDRDDDYASRPPEWGKRLEVSCSS.

Positions 86, 88, 89, 109, 121, 122, 172, and 179 each coordinate ATP. The active-site Proton acceptor is Asp248. The Mg(2+) site is built by Asn249 and Asp258. Asp258 is a binding site for ATP.

Belongs to the SELO family. Mg(2+) is required as a cofactor. It depends on Mn(2+) as a cofactor.

The enzyme catalyses L-seryl-[protein] + ATP = 3-O-(5'-adenylyl)-L-seryl-[protein] + diphosphate. The catalysed reaction is L-threonyl-[protein] + ATP = 3-O-(5'-adenylyl)-L-threonyl-[protein] + diphosphate. It carries out the reaction L-tyrosyl-[protein] + ATP = O-(5'-adenylyl)-L-tyrosyl-[protein] + diphosphate. It catalyses the reaction L-histidyl-[protein] + UTP = N(tele)-(5'-uridylyl)-L-histidyl-[protein] + diphosphate. The enzyme catalyses L-seryl-[protein] + UTP = O-(5'-uridylyl)-L-seryl-[protein] + diphosphate. The catalysed reaction is L-tyrosyl-[protein] + UTP = O-(5'-uridylyl)-L-tyrosyl-[protein] + diphosphate. Functionally, nucleotidyltransferase involved in the post-translational modification of proteins. It can catalyze the addition of adenosine monophosphate (AMP) or uridine monophosphate (UMP) to a protein, resulting in modifications known as AMPylation and UMPylation. The polypeptide is Protein nucleotidyltransferase YdiU (Salmonella choleraesuis (strain SC-B67)).